We begin with the raw amino-acid sequence, 84 residues long: Large ribosomal subunit protein bL27 (84 aa).

The disordered stretch occupies residues 1–22 (MAHKKGGGSTKNGRDSNPKYLG).

Belongs to the bacterial ribosomal protein bL27 family.

In Prosthecochloris aestuarii (strain DSM 271 / SK 413), this protein is Large ribosomal subunit protein bL27.